The following is a 372-amino-acid chain: Dual-specificity RNA methyltransferase RlmN (372 aa).

Residue glutamate 94 is the Proton acceptor of the active site. The 240-residue stretch at 100 to 339 (DGDRATLCVS…VTIRKTRGDD (240 aa)) folds into the Radical SAM core domain. An intrachain disulfide couples cysteine 107 to cysteine 344. Cysteine 114, cysteine 118, and cysteine 121 together coordinate [4Fe-4S] cluster. S-adenosyl-L-methionine contacts are provided by residues 168–169 (GE), serine 200, 222–224 (SLH), and asparagine 301. Residue cysteine 344 is the S-methylcysteine intermediate of the active site.

The protein belongs to the radical SAM superfamily. RlmN family. The cofactor is [4Fe-4S] cluster.

The protein resides in the cytoplasm. The catalysed reaction is adenosine(2503) in 23S rRNA + 2 reduced [2Fe-2S]-[ferredoxin] + 2 S-adenosyl-L-methionine = 2-methyladenosine(2503) in 23S rRNA + 5'-deoxyadenosine + L-methionine + 2 oxidized [2Fe-2S]-[ferredoxin] + S-adenosyl-L-homocysteine. It catalyses the reaction adenosine(37) in tRNA + 2 reduced [2Fe-2S]-[ferredoxin] + 2 S-adenosyl-L-methionine = 2-methyladenosine(37) in tRNA + 5'-deoxyadenosine + L-methionine + 2 oxidized [2Fe-2S]-[ferredoxin] + S-adenosyl-L-homocysteine. Functionally, specifically methylates position 2 of adenine 2503 in 23S rRNA and position 2 of adenine 37 in tRNAs. m2A2503 modification seems to play a crucial role in the proofreading step occurring at the peptidyl transferase center and thus would serve to optimize ribosomal fidelity. The sequence is that of Dual-specificity RNA methyltransferase RlmN from Aliivibrio fischeri (strain ATCC 700601 / ES114) (Vibrio fischeri).